The primary structure comprises 91 residues: LYR motif-containing protein 4 (91 aa).

Pantetheine 4'-phosphate-binding residues include Arg-6 and Lys-44. Residue Lys-47 is modified to N6-succinyllysine.

This sequence belongs to the complex I LYR family. As to quaternary structure, homodimer. Component of the mitochondrial core iron-sulfur cluster (ISC) complex composed of NFS1, LYRM4, NDUFAB1, ISCU, FXN, and FDX2; this complex is a heterohexamer containing two copies of each monomer. Component of the cyteine desulfurase complex composed of NFS1, LYRM4 and NDUFAB1; this complex contributes to the stability and cysteine desulfurase activity of NFS1. Interacts with FXN; this interaction is nickel-dependent. Interacts with the cytoplasmic form of NFS1; the complex increases the stability of NFS1. Forms a complex with the cytoplasmic form of NFS1; this complex increases the stability and cysteine desulfurase activity of NFS1. Interacts with NFS1. Component of a complex composed of FXN, NFS1, LYRM4 and ISCU.

Its subcellular location is the mitochondrion. It localises to the nucleus. The protein operates within cofactor biosynthesis; iron-sulfur cluster biosynthesis. Functionally, stabilizing factor, of the core iron-sulfur cluster (ISC) assembly complex, that regulates, in association with NDUFAB1, the stability and the cysteine desulfurase activity of NFS1 and participates in the [2Fe-2S] clusters assembly on the scaffolding protein ISCU. The core iron-sulfur cluster (ISC) assembly complex is involved in the de novo synthesis of a [2Fe-2S] cluster, the first step of the mitochondrial iron-sulfur protein biogenesis. This process is initiated by the cysteine desulfurase complex (NFS1:LYRM4:NDUFAB1) that produces persulfide which is delivered on the scaffold protein ISCU in a FXN-dependent manner. Then this complex is stabilized by FDX2 which provides reducing equivalents to accomplish the [2Fe-2S] cluster assembly. Finally, the [2Fe-2S] cluster is transferred from ISCU to chaperone proteins, including HSCB, HSPA9 and GLRX5. May also participates in the iron-sulfur protein biogenesis in the cytoplasm through its interaction with the cytoplasmic form of NFS1. This chain is LYR motif-containing protein 4, found in Mus musculus (Mouse).